A 226-amino-acid polypeptide reads, in one-letter code: Ribose-5-phosphate isomerase A (226 aa).

Substrate-binding positions include 25–28 (TGST), 81–84 (DGAD), and 94–97 (KGGG). Residue Glu103 is the Proton acceptor of the active site. Position 121 (Lys121) interacts with substrate.

This sequence belongs to the ribose 5-phosphate isomerase family. In terms of assembly, homodimer.

The enzyme catalyses aldehydo-D-ribose 5-phosphate = D-ribulose 5-phosphate. It participates in carbohydrate degradation; pentose phosphate pathway; D-ribose 5-phosphate from D-ribulose 5-phosphate (non-oxidative stage): step 1/1. Functionally, catalyzes the reversible conversion of ribose-5-phosphate to ribulose 5-phosphate. In Enterococcus faecalis (strain ATCC 700802 / V583), this protein is Ribose-5-phosphate isomerase A.